The following is a 165-amino-acid chain: Probable chemoreceptor glutamine deamidase CheD (165 aa).

It belongs to the CheD family.

The enzyme catalyses L-glutaminyl-[protein] + H2O = L-glutamyl-[protein] + NH4(+). Probably deamidates glutamine residues to glutamate on methyl-accepting chemotaxis receptors (MCPs), playing an important role in chemotaxis. This Clostridium tetani (strain Massachusetts / E88) protein is Probable chemoreceptor glutamine deamidase CheD.